The chain runs to 131 residues: Ribosome-binding factor A (131 aa).

The protein belongs to the RbfA family. Monomer. Binds 30S ribosomal subunits, but not 50S ribosomal subunits or 70S ribosomes.

It localises to the cytoplasm. In terms of biological role, one of several proteins that assist in the late maturation steps of the functional core of the 30S ribosomal subunit. Associates with free 30S ribosomal subunits (but not with 30S subunits that are part of 70S ribosomes or polysomes). Required for efficient processing of 16S rRNA. May interact with the 5'-terminal helix region of 16S rRNA. In Protochlamydia amoebophila (strain UWE25), this protein is Ribosome-binding factor A.